The primary structure comprises 819 residues: DNA topoisomerase 4 subunit A (819 aa).

Residues 30 to 496 (LPDIRDGLKP…QIIEIDTASL (467 aa)) form the Topo IIA-type catalytic domain. Residue tyrosine 118 is the O-(5'-phospho-DNA)-tyrosine intermediate of the active site.

The protein belongs to the type II topoisomerase GyrA/ParC subunit family. ParC type 2 subfamily. As to quaternary structure, heterotetramer composed of ParC and ParE.

The protein localises to the cell membrane. It carries out the reaction ATP-dependent breakage, passage and rejoining of double-stranded DNA.. In terms of biological role, topoisomerase IV is essential for chromosome segregation. It relaxes supercoiled DNA. Performs the decatenation events required during the replication of a circular DNA molecule. This Streptococcus pyogenes serotype M18 (strain MGAS8232) protein is DNA topoisomerase 4 subunit A.